The primary structure comprises 528 residues: UDP-glucuronosyltransferase 2B10 (528 aa).

Residues 1 to 23 form the signal peptide; that stretch reads MALKWTTVLLIQLSFYFSSGSCG. An N-linked (GlcNAc...) asparagine glycan is attached at asparagine 66. Position 134 is an N6-succinyllysine (lysine 134). N-linked (GlcNAc...) asparagine glycans are attached at residues asparagine 314 and asparagine 481. Residues 492-512 form a helical membrane-spanning segment; that stretch reads VIGFLLACVATVLFIITKCCL.

The protein belongs to the UDP-glycosyltransferase family.

It localises to the microsome membrane. The protein resides in the endoplasmic reticulum membrane. The enzyme catalyses glucuronate acceptor + UDP-alpha-D-glucuronate = acceptor beta-D-glucuronoside + UDP + H(+). Its function is as follows. UDPGT is of major importance in the conjugation and subsequent elimination of potentially toxic xenobiotics and endogenous compounds. The chain is UDP-glucuronosyltransferase 2B10 (UGT2B10) from Homo sapiens (Human).